Reading from the N-terminus, the 80-residue chain is Putative UPF0377 protein YMR324C (80 aa).

A helical membrane pass occupies residues 13–33 (ACIFIDSVCEGIVFWGLCLFV).

This sequence belongs to the UPF0377 family.

It localises to the membrane. The chain is Putative UPF0377 protein YMR324C from Saccharomyces cerevisiae (strain ATCC 204508 / S288c) (Baker's yeast).